The primary structure comprises 167 residues: Endoribonuclease YbeY (167 aa).

3 residues coordinate Zn(2+): histidine 131, histidine 135, and histidine 141.

Belongs to the endoribonuclease YbeY family. The cofactor is Zn(2+).

It localises to the cytoplasm. Functionally, single strand-specific metallo-endoribonuclease involved in late-stage 70S ribosome quality control and in maturation of the 3' terminus of the 16S rRNA. The protein is Endoribonuclease YbeY of Rickettsia akari (strain Hartford).